The chain runs to 354 residues: Ferrochelatase (354 aa).

2 residues coordinate Fe cation: His-214 and Glu-295.

This sequence belongs to the ferrochelatase family.

Its subcellular location is the cytoplasm. The enzyme catalyses heme b + 2 H(+) = protoporphyrin IX + Fe(2+). Its pathway is porphyrin-containing compound metabolism; protoheme biosynthesis; protoheme from protoporphyrin-IX: step 1/1. Catalyzes the ferrous insertion into protoporphyrin IX. The protein is Ferrochelatase of Burkholderia cenocepacia (strain HI2424).